A 763-amino-acid polypeptide reads, in one-letter code: Phosphoglycerol transferase I (763 aa).

4 consecutive transmembrane segments (helical) span residues 1–21 (MSEL…AWKA), 26–46 (WWFA…ITLF), 77–97 (ILPG…LGWI), and 108–128 (FGYS…SPAF).

This sequence belongs to the OpgB family.

Its subcellular location is the cell inner membrane. It catalyses the reaction a phosphatidylglycerol + a membrane-derived-oligosaccharide D-glucose = a 1,2-diacyl-sn-glycerol + a membrane-derived-oligosaccharide 6-(glycerophospho)-D-glucose.. It functions in the pathway glycan metabolism; osmoregulated periplasmic glucan (OPG) biosynthesis. Functionally, transfers a phosphoglycerol residue from phosphatidylglycerol to the membrane-bound nascent glucan backbones. The chain is Phosphoglycerol transferase I from Escherichia coli O45:K1 (strain S88 / ExPEC).